We begin with the raw amino-acid sequence, 311 residues long: Dihydroorotate dehydrogenase A (fumarate) (311 aa).

Residues S19 and 43–44 (KS) contribute to the FMN site. Residues K43, 67 to 71 (NSMGL), and N127 contribute to the substrate site. N127 serves as a coordination point for FMN. The active-site Nucleophile is C130. Residues K164 and V192 each coordinate FMN. 193–194 (NS) is a substrate binding site. FMN-binding positions include G221, 249-250 (GG), and 271-272 (GT).

The protein belongs to the dihydroorotate dehydrogenase family. Type 1 subfamily. In terms of assembly, homodimer. The cofactor is FMN.

The protein localises to the cytoplasm. It carries out the reaction (S)-dihydroorotate + fumarate = orotate + succinate. It participates in pyrimidine metabolism; UMP biosynthesis via de novo pathway. Catalyzes the conversion of dihydroorotate to orotate with fumarate as the electron acceptor. The protein is Dihydroorotate dehydrogenase A (fumarate) (pyrDA) of Lactococcus lactis subsp. lactis (strain IL1403) (Streptococcus lactis).